Here is a 545-residue protein sequence, read N- to C-terminus: Glucans biosynthesis protein G (545 aa).

The signal sequence occupies residues 1–34; it reads MVSLLRCQSFKPSSSLICSLALSAAFALSSSAFA. The tract at residues 38-60 is disordered; the sequence is KPAENKPATPVVSPPKATAQPAN.

Belongs to the OpgD/OpgG family.

The protein resides in the periplasm. The protein operates within glycan metabolism; osmoregulated periplasmic glucan (OPG) biosynthesis. Involved in the biosynthesis of osmoregulated periplasmic glucans (OPGs). The sequence is that of Glucans biosynthesis protein G from Shewanella sp. (strain MR-7).